Reading from the N-terminus, the 448-residue chain is Methionine aminopeptidase 2-1 (448 aa).

The segment at 1–90 (MAAQASEKLE…PPRVPVSSLF (90 aa)) is disordered. Over residues 22–33 (AAGPAKAGQADA) the composition is skewed to low complexity. The span at 34 to 46 (GEVEDESDDDADD) shows a compositional bias: acidic residues. Residues 47–58 (AGAAADGAANGA) are compositionally biased toward low complexity. Residues 59 to 74 (AKKKKKRKSKKKKKGG) are compositionally biased toward basic residues. A compositionally biased stretch (low complexity) spans 75-88 (AKVQSSPPRVPVSS). Residue His198 coordinates substrate. Residues Asp218, Asp229, and His301 each contribute to the a divalent metal cation site. His309 contributes to the substrate binding site. The a divalent metal cation site is built by Glu334 and Glu429.

This sequence belongs to the peptidase M24A family. Methionine aminopeptidase eukaryotic type 2 subfamily. The cofactor is Co(2+). Zn(2+) is required as a cofactor. It depends on Mn(2+) as a cofactor. Requires Fe(2+) as cofactor.

It is found in the cytoplasm. It carries out the reaction Release of N-terminal amino acids, preferentially methionine, from peptides and arylamides.. Cotranslationally removes the N-terminal methionine from nascent proteins. The N-terminal methionine is often cleaved when the second residue in the primary sequence is small and uncharged (Met-Ala-, Cys, Gly, Pro, Ser, Thr, or Val). In Emericella nidulans (strain FGSC A4 / ATCC 38163 / CBS 112.46 / NRRL 194 / M139) (Aspergillus nidulans), this protein is Methionine aminopeptidase 2-1.